A 1190-amino-acid chain; its full sequence is Isoleucine--tRNA ligase, cytoplasmic (1190 aa).

The short motif at 49-59 is the 'HIGH' region element; the sequence is PFATGLPHYGH. The disordered stretch occupies residues 271 to 299; that stretch reads DKPKAKLSNGPAGDTKKANPKAKGAKPES. Positions 632–636 match the 'KMSKS' region motif; that stretch reads KMAKK. Residue K635 coordinates ATP.

It belongs to the class-I aminoacyl-tRNA synthetase family.

Its subcellular location is the cytoplasm. The protein resides in the cytosol. The enzyme catalyses tRNA(Ile) + L-isoleucine + ATP = L-isoleucyl-tRNA(Ile) + AMP + diphosphate. This is Isoleucine--tRNA ligase, cytoplasmic from Arabidopsis thaliana (Mouse-ear cress).